The sequence spans 155 residues: Aspartate carbamoyltransferase regulatory chain (155 aa).

Zn(2+) contacts are provided by Cys-109, Cys-114, Cys-138, and Cys-141.

Belongs to the PyrI family. As to quaternary structure, contains catalytic and regulatory chains. It depends on Zn(2+) as a cofactor.

Its function is as follows. Involved in allosteric regulation of aspartate carbamoyltransferase. The protein is Aspartate carbamoyltransferase regulatory chain of Vibrio cholerae serotype O1 (strain ATCC 39315 / El Tor Inaba N16961).